Reading from the N-terminus, the 1157-residue chain is Probable ATP-dependent RNA helicase DHX37 (1157 aa).

Residues 1 to 10 (MGKLRRRYNI) show a composition bias toward basic residues. Disordered stretches follow at residues 1-77 (MGKL…KKEK) and 116-225 (TSKL…AAPP). Positions 21–30 (SKGPPEPPPV) are enriched in pro residues. The span at 159–184 (AEEEEEEEEESESELEEESELDEDPA) shows a compositional bias: acidic residues. Composition is skewed to pro residues over residues 198-208 (PLPPAPAPSSQ) and 216-225 (VPPPPAAAPP). The 168-residue stretch at 262–429 (MEAVAEHPIV…PRLFAKPPPV (168 aa)) folds into the Helicase ATP-binding domain. ATP is bound at residue 275-282 (GETGSGKT). A DEAH box motif is present at residues 372–375 (DEAH). The Helicase C-terminal domain maps to 459-716 (KVCKIHRMLP…DLILQMKALN (258 aa)). Disordered stretches follow at residues 494-523 (PPSRARPQEKDDDQKDSVEEMRKFKKSRAR) and 542-584 (VLPA…QPDA). The segment covering 499-515 (RPQEKDDDQKDSVEEMR) has biased composition (basic and acidic residues). Residues 547–571 (EGDEDREAEVDEEEGALDSDLDLDL) show a composition bias toward acidic residues.

It belongs to the DEAD box helicase family. DEAH subfamily. As to quaternary structure, part of the small subunit (SSU) processome, composed of more than 70 proteins and the RNA chaperone small nucleolar RNA (snoRNA) U3. Interacts with UTP14A. In terms of tissue distribution, expressed in the fallopian tube, ovary, uterus and testis. Also expressed in the brain.

It is found in the nucleus. The protein localises to the nucleolus. Its subcellular location is the cytoplasm. It localises to the nucleus membrane. The enzyme catalyses ATP + H2O = ADP + phosphate + H(+). In terms of biological role, ATP-binding RNA helicase that plays a role in maturation of the small ribosomal subunit in ribosome biogenesis. Required for the release of the U3 snoRNP from pre-ribosomal particles. Part of the small subunit (SSU) processome, first precursor of the small eukaryotic ribosomal subunit. During the assembly of the SSU processome in the nucleolus, many ribosome biogenesis factors, an RNA chaperone and ribosomal proteins associate with the nascent pre-rRNA and work in concert to generate RNA folding, modifications, rearrangements and cleavage as well as targeted degradation of pre-ribosomal RNA by the RNA exosome. Plays a role in early testis development. Probably also plays a role in brain development. The sequence is that of Probable ATP-dependent RNA helicase DHX37 from Homo sapiens (Human).